Here is a 390-residue protein sequence, read N- to C-terminus: tRNA(Met) cytidine acetate ligase (390 aa).

Residues 7 to 20 (ITEY…HIYH), G101, N152, and R177 each bind ATP.

It belongs to the TmcAL family.

Its subcellular location is the cytoplasm. The enzyme catalyses cytidine(34) in elongator tRNA(Met) + acetate + ATP = N(4)-acetylcytidine(34) in elongator tRNA(Met) + AMP + diphosphate. In terms of biological role, catalyzes the formation of N(4)-acetylcytidine (ac(4)C) at the wobble position of elongator tRNA(Met), using acetate and ATP as substrates. First activates an acetate ion to form acetyladenylate (Ac-AMP) and then transfers the acetyl group to tRNA to form ac(4)C34. This Leuconostoc mesenteroides subsp. mesenteroides (strain ATCC 8293 / DSM 20343 / BCRC 11652 / CCM 1803 / JCM 6124 / NCDO 523 / NBRC 100496 / NCIMB 8023 / NCTC 12954 / NRRL B-1118 / 37Y) protein is tRNA(Met) cytidine acetate ligase.